Reading from the N-terminus, the 351-residue chain is Cytoplasmic dynein 2 light intermediate chain 1 (351 aa).

Positions 304-335 (TLKAIQDPARDPQYAESEVDEMRVQKDQELEQ) are disordered. Over residues 323-335 (DEMRVQKDQELEQ) the composition is skewed to basic and acidic residues.

It belongs to the dynein light intermediate chain family. As to quaternary structure, light intermediate chain of the cytoplasmic dynein complex 2, a multisubunit complex composed at least of eleven different proteins. The cytoplasmic dynein 2 complex consists of two catalytic heavy chains (HCs) and a number of non-catalytic subunits presented by intermediate chains (ICs), light intermediate chains (LICs) and light chains (LCs). Among them, a heavy chain (DYNC2H1), two intermediate chains (DYNC2I2 and DYNC2I1), a light intermediate chain (DYNC2LI1), and a light chain (DYNLT2B) are unique to the dynein-2 complex, but a subset of light chains are also shared by dynein-1 and dynein-2 complexes. Dynein-2 complex is built around two copies of cytoplasmic dynein 2 heavy chain 1 (DYNC2H1). The C-terminal region forms the motor domain, which converts the energy from ATP hydrolysis into movement. Its N-terminal region forms the tail, an extended structure that binds the other subunits and holds the two heavy chains in a homodimer. Interacts with DYNC2H1 (via N-terminus); this interaction stabilizes the dynein-2 complex structure.

It is found in the cytoplasm. It localises to the cell projection. The protein localises to the cilium. The protein resides in the cytoskeleton. Its subcellular location is the cilium basal body. It is found in the cilium axoneme. It localises to the microtubule organizing center. The protein localises to the centrosome. Functionally, acts as one of several non-catalytic accessory components of the cytoplasmic dynein 2 complex (dynein-2 complex), a motor protein complex that drives the movement of cargos along microtubules within cilia and flagella in concert with the intraflagellar transport (IFT) system, facilitating the assembly of these organelles. Involved in the regulation of ciliary length. This is Cytoplasmic dynein 2 light intermediate chain 1 (Dync2li1) from Rattus norvegicus (Rat).